The primary structure comprises 250 residues: Global transcriptional regulator CodY (250 aa).

The interval methionine 1–leucine 147 is GAF domain. Residues alanine 195–arginine 214 constitute a DNA-binding region (H-T-H motif).

Belongs to the CodY family.

The protein resides in the cytoplasm. DNA-binding global transcriptional regulator which is involved in the adaptive response to starvation and acts by directly or indirectly controlling the expression of numerous genes in response to nutrient availability. During rapid exponential growth, CodY is highly active and represses genes whose products allow adaptation to nutrient depletion. The protein is Global transcriptional regulator CodY of Thermoanaerobacter sp. (strain X514).